A 160-amino-acid chain; its full sequence is Ribosomal RNA large subunit methyltransferase H (160 aa).

S-adenosyl-L-methionine is bound by residues Leu77, Gly109, and 128–133 (FSRMTF).

Belongs to the RNA methyltransferase RlmH family. As to quaternary structure, homodimer.

It localises to the cytoplasm. The enzyme catalyses pseudouridine(1915) in 23S rRNA + S-adenosyl-L-methionine = N(3)-methylpseudouridine(1915) in 23S rRNA + S-adenosyl-L-homocysteine + H(+). Specifically methylates the pseudouridine at position 1915 (m3Psi1915) in 23S rRNA. This Pelotomaculum thermopropionicum (strain DSM 13744 / JCM 10971 / SI) protein is Ribosomal RNA large subunit methyltransferase H.